A 502-amino-acid polypeptide reads, in one-letter code: MSNKHTQADVILIGAGIMSATLGSLLKELSPNLEIRVFEKLENPGEESSNEWNNAGTGHSALCELNYTSERTDGSIDINKAVKVNEQFQLSRQFWSYLVNRNLIRNPEDFIRALPHISLVQGEDNVTFLRKRFKALVNHPLFNGMEFSDDNEKLKEWMPLIMDKRDTNEPIAATKIDSGTDVNFGALTRLLFQEFDHKGIDVNYNHSVEDIKRNSEGLWEVKVHDMNDEKIEYHTAKFVFIGAGGGSLPLLQKTGIKESKHIGGFPVSGLFMVCNNPEVIEQHHAKVYGKAKVGAPPMSVPHLDTRFIDGKKSLLFGPFAGFSPKFLKTGSLFDLMHSVKSDNLFTMLSAGMKELPLTKYLIQQVVLSNEKRMEELREFIPNAQSKDWDIVIAGQRVQVIKDTEDGGKGTLQFGTEVVCGEDGTMAALLGASPGASTAVHVMLEVIQKCFPEHLQEWEPKIKEMIPSYGIALSENPELYKEIEVSIEKALGLKNEEPMVIPS.

The protein belongs to the MQO family. Requires FAD as cofactor.

It carries out the reaction (S)-malate + a quinone = a quinol + oxaloacetate. Its pathway is carbohydrate metabolism; tricarboxylic acid cycle; oxaloacetate from (S)-malate (quinone route): step 1/1. This chain is Probable malate:quinone oxidoreductase, found in Oceanobacillus iheyensis (strain DSM 14371 / CIP 107618 / JCM 11309 / KCTC 3954 / HTE831).